The chain runs to 267 residues: tRNA pseudouridine synthase A (267 aa).

Asp53 functions as the Nucleophile in the catalytic mechanism. Tyr114 provides a ligand contact to substrate.

The protein belongs to the tRNA pseudouridine synthase TruA family. As to quaternary structure, homodimer.

The enzyme catalyses uridine(38/39/40) in tRNA = pseudouridine(38/39/40) in tRNA. Functionally, formation of pseudouridine at positions 38, 39 and 40 in the anticodon stem and loop of transfer RNAs. The polypeptide is tRNA pseudouridine synthase A (Chlamydia trachomatis serovar L2b (strain UCH-1/proctitis)).